A 253-amino-acid chain; its full sequence is tRNA pseudouridine synthase A (253 aa).

Asp-53 serves as the catalytic Nucleophile. Tyr-111 contacts substrate.

It belongs to the tRNA pseudouridine synthase TruA family. In terms of assembly, homodimer.

The catalysed reaction is uridine(38/39/40) in tRNA = pseudouridine(38/39/40) in tRNA. Formation of pseudouridine at positions 38, 39 and 40 in the anticodon stem and loop of transfer RNAs. This chain is tRNA pseudouridine synthase A, found in Oceanobacillus iheyensis (strain DSM 14371 / CIP 107618 / JCM 11309 / KCTC 3954 / HTE831).